The primary structure comprises 363 residues: Putative glutamate--cysteine ligase 2-3 (363 aa).

It belongs to the glutamate--cysteine ligase type 2 family. YbdK subfamily.

The catalysed reaction is L-cysteine + L-glutamate + ATP = gamma-L-glutamyl-L-cysteine + ADP + phosphate + H(+). ATP-dependent carboxylate-amine ligase which exhibits weak glutamate--cysteine ligase activity. The polypeptide is Putative glutamate--cysteine ligase 2-3 (Rubrobacter xylanophilus (strain DSM 9941 / JCM 11954 / NBRC 16129 / PRD-1)).